The following is a 364-amino-acid chain: DNA replication and repair protein RecF (364 aa).

Gly-30 to Thr-37 serves as a coordination point for ATP.

It belongs to the RecF family.

It localises to the cytoplasm. Functionally, the RecF protein is involved in DNA metabolism; it is required for DNA replication and normal SOS inducibility. RecF binds preferentially to single-stranded, linear DNA. It also seems to bind ATP. The chain is DNA replication and repair protein RecF from Sodalis glossinidius (strain morsitans).